The chain runs to 408 residues: tRNA-specific 2-thiouridylase MnmA (408 aa).

ATP-binding positions include 27 to 34 (AMSGGVDS) and Leu53. Catalysis depends on Cys121, which acts as the Nucleophile. Cys121 and Cys222 are oxidised to a cystine. Residue Gly145 coordinates ATP. The tract at residues 172-174 (RDQ) is interaction with tRNA. Cys222 serves as the catalytic Cysteine persulfide intermediate.

The protein belongs to the MnmA/TRMU family.

It is found in the cytoplasm. It carries out the reaction S-sulfanyl-L-cysteinyl-[protein] + uridine(34) in tRNA + AH2 + ATP = 2-thiouridine(34) in tRNA + L-cysteinyl-[protein] + A + AMP + diphosphate + H(+). Functionally, catalyzes the 2-thiolation of uridine at the wobble position (U34) of tRNA, leading to the formation of s(2)U34. This Rhizobium johnstonii (strain DSM 114642 / LMG 32736 / 3841) (Rhizobium leguminosarum bv. viciae) protein is tRNA-specific 2-thiouridylase MnmA.